The primary structure comprises 275 residues: Vitamin B12-binding protein (275 aa).

The first 27 residues, 1–27 (MKWIKSTGSIGLSLLLFLSSFSHSLYA), serve as a signal peptide directing secretion. The 245-residue stretch at 31–275 (RVISLSPSTT…LCQQLNDNGS (245 aa)) folds into the Fe/B12 periplasmic-binding domain. Y58 is a cyanocob(III)alamin binding site. Residues C191 and C267 are joined by a disulfide bond.

This sequence belongs to the BtuF family. In terms of assembly, the complex is composed of two ATP-binding proteins (BtuD), two transmembrane proteins (BtuC) and a solute-binding protein (BtuF).

The protein localises to the periplasm. Functionally, part of the ABC transporter complex BtuCDF involved in vitamin B12 import. Binds vitamin B12 and delivers it to the periplasmic surface of BtuC. The sequence is that of Vitamin B12-binding protein from Photorhabdus laumondii subsp. laumondii (strain DSM 15139 / CIP 105565 / TT01) (Photorhabdus luminescens subsp. laumondii).